A 729-amino-acid chain; its full sequence is Catalase-peroxidase (729 aa).

Residues 1 to 33 (MSAHNTNESAVGKCPFHEQKEEKSVLARGAGGG) form a disordered region. Positions 15 to 25 (PFHEQKEEKSV) are enriched in basic and acidic residues. Positions 108–229 (WHSAGTYRTV…LGATEMGLIY (122 aa)) form a cross-link, tryptophyl-tyrosyl-methioninium (Trp-Tyr) (with M-255). Residue histidine 109 is the Proton acceptor of the active site. A cross-link (tryptophyl-tyrosyl-methioninium (Tyr-Met) (with W-108)) is located at residues 229-255 (YVNPEGPEASGNPASAAPAIRATFGNM). Histidine 270 contacts heme b.

The protein belongs to the peroxidase family. Peroxidase/catalase subfamily. Homodimer or homotetramer. Heme b serves as cofactor. Post-translationally, formation of the three residue Trp-Tyr-Met cross-link is important for the catalase, but not the peroxidase activity of the enzyme.

The enzyme catalyses H2O2 + AH2 = A + 2 H2O. It carries out the reaction 2 H2O2 = O2 + 2 H2O. Bifunctional enzyme with both catalase and broad-spectrum peroxidase activity. This chain is Catalase-peroxidase, found in Erwinia tasmaniensis (strain DSM 17950 / CFBP 7177 / CIP 109463 / NCPPB 4357 / Et1/99).